The following is a 418-amino-acid chain: Gamma-glutamyl phosphate reductase (418 aa).

This sequence belongs to the gamma-glutamyl phosphate reductase family.

It localises to the cytoplasm. The catalysed reaction is L-glutamate 5-semialdehyde + phosphate + NADP(+) = L-glutamyl 5-phosphate + NADPH + H(+). Its pathway is amino-acid biosynthesis; L-proline biosynthesis; L-glutamate 5-semialdehyde from L-glutamate: step 2/2. In terms of biological role, catalyzes the NADPH-dependent reduction of L-glutamate 5-phosphate into L-glutamate 5-semialdehyde and phosphate. The product spontaneously undergoes cyclization to form 1-pyrroline-5-carboxylate. The protein is Gamma-glutamyl phosphate reductase of Pelobacter propionicus (strain DSM 2379 / NBRC 103807 / OttBd1).